The chain runs to 345 residues: Biotin synthase (345 aa).

Residues 38–256 enclose the Radical SAM core domain; it reads RQVQVSTLLS…IAVARIMMPS (219 aa). Residues cysteine 53, cysteine 57, and cysteine 60 each contribute to the [4Fe-4S] cluster site. [2Fe-2S] cluster contacts are provided by cysteine 97, cysteine 128, cysteine 188, and arginine 260.

The protein belongs to the radical SAM superfamily. Biotin synthase family. Homodimer. It depends on [4Fe-4S] cluster as a cofactor. Requires [2Fe-2S] cluster as cofactor.

The enzyme catalyses (4R,5S)-dethiobiotin + (sulfur carrier)-SH + 2 reduced [2Fe-2S]-[ferredoxin] + 2 S-adenosyl-L-methionine = (sulfur carrier)-H + biotin + 2 5'-deoxyadenosine + 2 L-methionine + 2 oxidized [2Fe-2S]-[ferredoxin]. It participates in cofactor biosynthesis; biotin biosynthesis; biotin from 7,8-diaminononanoate: step 2/2. Catalyzes the conversion of dethiobiotin (DTB) to biotin by the insertion of a sulfur atom into dethiobiotin via a radical-based mechanism. This Yersinia pestis bv. Antiqua (strain Antiqua) protein is Biotin synthase.